Reading from the N-terminus, the 881-residue chain is Fanconi anemia core complex-associated protein 100 (881 aa).

The segment at 94-119 (GRSRSTSQDDRDSEDGDQPSPVIPVD) is disordered. Ser-667 bears the Phosphoserine mark.

In terms of assembly, belongs to the multisubunit FA complex composed of FANCA, FANCB, FANCC, FANCE, FANCF, FANCG, FANCL/PHF9, FANCM, FAAP24 and FAAP100. Forms a subcomplex with FANCB and FANCL.

Its subcellular location is the nucleus. Its function is as follows. Plays a role in Fanconi anemia-associated DNA damage response network. Regulates FANCD2 monoubiquitination and the stability of the FA core complex. Induces chromosomal instability as well as hypersensitivity to DNA cross-linking agents, when repressed. This Homo sapiens (Human) protein is Fanconi anemia core complex-associated protein 100.